The chain runs to 226 residues: Ribonuclease 3 (226 aa).

In terms of domain architecture, RNase III spans 5-127; the sequence is LERLQRALGY…IIGAIYLDAG (123 aa). A Mg(2+)-binding site is contributed by glutamate 40. The active site involves aspartate 44. The Mg(2+) site is built by aspartate 113 and glutamate 116. Residue glutamate 116 is part of the active site. The DRBM domain maps to 154–224; that stretch reads DSKTRLQEYL…AKQALLALGV (71 aa).

Belongs to the ribonuclease III family. Homodimer. It depends on Mg(2+) as a cofactor.

It localises to the cytoplasm. It carries out the reaction Endonucleolytic cleavage to 5'-phosphomonoester.. In terms of biological role, digests double-stranded RNA. Involved in the processing of primary rRNA transcript to yield the immediate precursors to the large and small rRNAs (23S and 16S). Processes some mRNAs, and tRNAs when they are encoded in the rRNA operon. Processes pre-crRNA and tracrRNA of type II CRISPR loci if present in the organism. The protein is Ribonuclease 3 of Hahella chejuensis (strain KCTC 2396).